A 473-amino-acid polypeptide reads, in one-letter code: Photosystem II CP43 reaction center protein (473 aa).

Positions 1–14 (MKTLYSLRRFYPVE) are excised as a propeptide. The residue at position 15 (Thr-15) is an N-acetylthreonine. Thr-15 carries the phosphothreonine modification. The next 5 membrane-spanning stretches (helical) occupy residues 69–93 (LFEV…PHLA), 134–155 (LLGP…KDRN), 178–200 (KALY…RKIT), 255–275 (KPFA…LSYS), and 291–312 (WFNN…ASQA). Residue Glu-367 participates in [CaMn4O5] cluster binding. A helical transmembrane segment spans residues 447–471 (RARAAAAGFEKGIDRDFEPVLSMTP).

The protein belongs to the PsbB/PsbC family. PsbC subfamily. In terms of assembly, PSII is composed of 1 copy each of membrane proteins PsbA, PsbB, PsbC, PsbD, PsbE, PsbF, PsbH, PsbI, PsbJ, PsbK, PsbL, PsbM, PsbT, PsbX, PsbY, PsbZ, Psb30/Ycf12, at least 3 peripheral proteins of the oxygen-evolving complex and a large number of cofactors. It forms dimeric complexes. Binds multiple chlorophylls and provides some of the ligands for the Ca-4Mn-5O cluster of the oxygen-evolving complex. It may also provide a ligand for a Cl- that is required for oxygen evolution. PSII binds additional chlorophylls, carotenoids and specific lipids. is required as a cofactor.

It is found in the plastid. Its subcellular location is the chloroplast thylakoid membrane. One of the components of the core complex of photosystem II (PSII). It binds chlorophyll and helps catalyze the primary light-induced photochemical processes of PSII. PSII is a light-driven water:plastoquinone oxidoreductase, using light energy to abstract electrons from H(2)O, generating O(2) and a proton gradient subsequently used for ATP formation. This chain is Photosystem II CP43 reaction center protein, found in Populus trichocarpa (Western balsam poplar).